A 175-amino-acid polypeptide reads, in one-letter code: Large ribosomal subunit protein uL6 (175 aa).

This sequence belongs to the universal ribosomal protein uL6 family. As to quaternary structure, part of the 50S ribosomal subunit.

Its function is as follows. This protein binds to the 23S rRNA, and is important in its secondary structure. It is located near the subunit interface in the base of the L7/L12 stalk, and near the tRNA binding site of the peptidyltransferase center. This is Large ribosomal subunit protein uL6 from Xanthomonas axonopodis pv. citri (strain 306).